A 363-amino-acid chain; its full sequence is UDP-3-O-acylglucosamine N-acyltransferase (363 aa).

The Proton acceptor role is filled by histidine 252.

Belongs to the transferase hexapeptide repeat family. LpxD subfamily. Homotrimer.

The enzyme catalyses a UDP-3-O-[(3R)-3-hydroxyacyl]-alpha-D-glucosamine + a (3R)-hydroxyacyl-[ACP] = a UDP-2-N,3-O-bis[(3R)-3-hydroxyacyl]-alpha-D-glucosamine + holo-[ACP] + H(+). Its pathway is bacterial outer membrane biogenesis; LPS lipid A biosynthesis. In terms of biological role, catalyzes the N-acylation of UDP-3-O-acylglucosamine using 3-hydroxyacyl-ACP as the acyl donor. Is involved in the biosynthesis of lipid A, a phosphorylated glycolipid that anchors the lipopolysaccharide to the outer membrane of the cell. This is UDP-3-O-acylglucosamine N-acyltransferase from Cupriavidus taiwanensis (strain DSM 17343 / BCRC 17206 / CCUG 44338 / CIP 107171 / LMG 19424 / R1) (Ralstonia taiwanensis (strain LMG 19424)).